Here is a 239-residue protein sequence, read N- to C-terminus: Geranylgeranylglyceryl phosphate synthase (239 aa).

Residues D18 and S45 each coordinate Mg(2+). Sn-glycerol 1-phosphate is bound by residues 166 to 172 (YLEAGSG), 197 to 198 (GG), and 219 to 220 (GT).

The protein belongs to the GGGP/HepGP synthase family. Group II subfamily. It depends on Mg(2+) as a cofactor.

The protein resides in the cytoplasm. The catalysed reaction is sn-glycerol 1-phosphate + (2E,6E,10E)-geranylgeranyl diphosphate = sn-3-O-(geranylgeranyl)glycerol 1-phosphate + diphosphate. It functions in the pathway membrane lipid metabolism; glycerophospholipid metabolism. Prenyltransferase that catalyzes the transfer of the geranylgeranyl moiety of geranylgeranyl diphosphate (GGPP) to the C3 hydroxyl of sn-glycerol-1-phosphate (G1P). This reaction is the first ether-bond-formation step in the biosynthesis of archaeal membrane lipids. This is Geranylgeranylglyceryl phosphate synthase from Pyrobaculum arsenaticum (strain DSM 13514 / JCM 11321 / PZ6).